Here is a 184-residue protein sequence, read N- to C-terminus: Interferon alpha-1 (184 aa).

An N-terminal signal peptide occupies residues 1–23 (MALPVSLLMALVVLSCHSICSLG). 2 cysteine pairs are disulfide-bonded: C24–C122 and C52–C162.

This sequence belongs to the alpha/beta interferon family. Interacts with CR2.

The protein localises to the secreted. In terms of biological role, produced by macrophages, IFN-alpha have antiviral activities. Interferon stimulates the production of two enzymes: a protein kinase and an oligoadenylate synthetase. The chain is Interferon alpha-1 from Equus caballus (Horse).